A 365-amino-acid chain; its full sequence is MPRPILATIHPAAVHHNLERARRAAPDARVWAVVKANAYGHGIERVFEGLRAADGFALLDLAEAERVRALGWRGPILLLEGVFEPRDLELCSRLGLWHAVHCDAQIDWLAAHKTQVPHRVFLKMNSGMNRLGFTPERYRSAWARLNALPQVDEISCMTHFSDADGPRGIAHQVQAFQTATRDLPGERCIANSAALLRHGGDAQVRLDWVRAGIVLYGSAPDHPERRAADWDLQPTMTLASRIIGVQQLQAGDTVGYGSRFTAQGPLGIGVVACGYADGYPRHCDTGTPVLVNGVRTRTIGRVSMDMLAVDLTPVPGAGLGAEVTLWGRAANGAVLPIDEVAQAGGTIGYELMCALAPRVPVVVQD.

K35 functions as the Proton acceptor; specific for D-alanine in the catalytic mechanism. K35 is subject to N6-(pyridoxal phosphate)lysine. R130 is a binding site for substrate. The active-site Proton acceptor; specific for L-alanine is the Y256. M304 lines the substrate pocket.

This sequence belongs to the alanine racemase family. Requires pyridoxal 5'-phosphate as cofactor.

The catalysed reaction is L-alanine = D-alanine. It functions in the pathway amino-acid biosynthesis; D-alanine biosynthesis; D-alanine from L-alanine: step 1/1. In terms of biological role, catalyzes the interconversion of L-alanine and D-alanine. May also act on other amino acids. This is Alanine racemase (alr) from Acidovorax ebreus (strain TPSY) (Diaphorobacter sp. (strain TPSY)).